The primary structure comprises 103 residues: N(4)-acetylcytidine amidohydrolase (103 aa).

The region spanning Ile6–Lys101 is the ASCH domain. Catalysis depends on Lys21, which acts as the Proton acceptor. The Nucleophile role is filled by Thr24. The active-site Proton donor is Glu74.

This sequence belongs to the N(4)-acetylcytidine amidohydrolase family.

It catalyses the reaction N(4)-acetylcytidine + H2O = cytidine + acetate + H(+). The enzyme catalyses N(4)-acetyl-2'-deoxycytidine + H2O = 2'-deoxycytidine + acetate + H(+). The catalysed reaction is N(4)-acetylcytosine + H2O = cytosine + acetate + H(+). In terms of biological role, catalyzes the hydrolysis of N(4)-acetylcytidine (ac4C). This chain is N(4)-acetylcytidine amidohydrolase (yqfB), found in Shigella boydii serotype 4 (strain Sb227).